A 1021-amino-acid chain; its full sequence is Chondroitin sulfate ABC endolyase (1021 aa).

The first 24 residues, 1-24 (MPIFRFTALAMTLGLLSAPYNAMA), serve as a signal peptide directing secretion. Residues H43, M70, Q73, and D211 each coordinate Na(+). The active-site Proton acceptor is the H501. Residue Y508 is the Proton donor of the active site.

This sequence belongs to the polysaccharide lyase 8 family. In terms of assembly, monomer.

Its subcellular location is the periplasm. It carries out the reaction Endolytic cleavage of (1-&gt;4)-beta-galactosaminic bonds between N-acetylgalactosamine and either D-glucuronic acid or L-iduronic acid to produce a mixture of Delta(4)-unsaturated oligosaccharides of different sizes that are ultimately degraded to Delta(4)-unsaturated tetra- and disaccharides.. Its activity is regulated as follows. Is inhibited by Zn(2+), Ni(2+), Fe(2+) and Cu(2+). Endolytic, broad-specificity glycosaminoglycan lyase, which degrades the polysaccharides chondroitin, chondroitin-4-sulfate, chondroitin-6-sulfate, dermatan sulfate and to a lesser extent hyaluronan, by beta-elimination of 1,4-hexosaminidic bond to unsaturated tetrasaccharides and disaccharides. Is not active against keratan sulfate, heparan sulfate, and heparin. Is able to promote functional recovery in the injured central nervous system (CNS), via its role in the disruption of the normal organization of the extracellular matrix (ECM). The protein is Chondroitin sulfate ABC endolyase of Proteus vulgaris.